The following is a 221-amino-acid chain: UPF0502 protein PA14_19450 (221 aa).

Belongs to the UPF0502 family.

The sequence is that of UPF0502 protein PA14_19450 from Pseudomonas aeruginosa (strain UCBPP-PA14).